A 349-amino-acid polypeptide reads, in one-letter code: Anthranilate phosphoribosyltransferase (349 aa).

5-phospho-alpha-D-ribose 1-diphosphate contacts are provided by residues Gly-82, 85-86 (GD), 92-95 (NVST), 110-118 (KHGNRAVSG), and Ser-122. Gly-82 contacts anthranilate. Residue Ser-94 participates in Mg(2+) binding. Asn-113 lines the anthranilate pocket. Anthranilate is bound at residue Arg-168. Asp-227 and Glu-228 together coordinate Mg(2+).

It belongs to the anthranilate phosphoribosyltransferase family. In terms of assembly, homodimer. Mg(2+) serves as cofactor.

The enzyme catalyses N-(5-phospho-beta-D-ribosyl)anthranilate + diphosphate = 5-phospho-alpha-D-ribose 1-diphosphate + anthranilate. It participates in amino-acid biosynthesis; L-tryptophan biosynthesis; L-tryptophan from chorismate: step 2/5. Its function is as follows. Catalyzes the transfer of the phosphoribosyl group of 5-phosphorylribose-1-pyrophosphate (PRPP) to anthranilate to yield N-(5'-phosphoribosyl)-anthranilate (PRA). In Pseudomonas fluorescens (strain Pf0-1), this protein is Anthranilate phosphoribosyltransferase.